Here is a 2345-residue protein sequence, read N- to C-terminus: Nonribisomal peptide synthetase malG (2345 aa).

Residues 226–620 (FSEQAKKNPT…VGRMGTVVKV (395 aa)) are adenylation 1. The 74-residue stretch at 766 to 839 (TENETLLRLL…EAAGTMISAG (74 aa)) folds into the Carrier 1 domain. Serine 800 is modified (O-(pantetheine 4'-phosphoryl)serine). Residues 877 to 1292 (EEIYPSTPLQ…LLCPSDKSKL (416 aa)) are condensation 1. The tract at residues 1317 to 1707 (VRSERTAVSA…GRKNREVKLR (391 aa)) is adenylation 2. Positions 1843-1926 (QPHESTALFV…DIARLIEGVK (84 aa)) constitute a Carrier 2 domain. Serine 1885 bears the O-(pantetheine 4'-phosphoryl)serine mark. The segment at 1969 to 2256 (GMSVFLTGGT…PRQLNALQSE (288 aa)) is reductase (R) domain.

The protein belongs to the NRP synthetase family.

It catalyses the reaction L-proline + L-tryptophan + 2 ATP + NADPH = (S)-3-(indol-3-ylmethyl)-6,7,8,8a-tetrahydropyrrolo[1,2-a]pyrazin-1-one + 2 AMP + 2 diphosphate + NADP(+) + H2O + H(+). Its function is as follows. Nonribisomal peptide synthetase; part of the gene cluster that mediates the biosynthesis of malbrancheamide, a dichlorinated fungal indole alkaloid that belongs to a family of natural products containing a characteristic bicyclo[2.2.2]diazaoctane core. The first step of malbrancheamide biosynthesis involves coupling of L-proline and L-tryptophan by malG, a bimodular NRPS, to produce L-Pro-L-Trp aldehyde through reductive offloading. This compound undergoes spontaneous cyclization and dehydration to give a dienamine which is reverse prenylated at C-2 by malE. The other prenyltransferase present in the cluster, malB, displays modest activity, suggesting that may be a redundant gene in the pathway. Subsequently, a [4+2] Diels-Alder cyclo-addition catalyzed by the bifunctional enzyme malC forms the characteristic bicyclo[2.2.2]diazaoctane ring of premalbrancheamid. Finally, the flavin-dependent halogenase malA catalyzes the iterative dichlorination of the indole ring of premalbrancheamide to yield C-9 monochlorinated malbrancheamide B, C-8 monochlorinated isomalbrancheamide B, and dichlorinated malbrancheamide. MalA is also able to brominate premalbrancheamide at C-9 to yield malbrancheamide C, and, to a lesser extend, at C-8 to yield isomalbrancheamide C. Finally, malA can brominate C-9 monochlorinated malbrancheamide B at C-8 to yield malbrancheamide D, or C-8 monochlorinated isomalbrancheamide B at C-9 to produce isomalbrancheamide D. The polypeptide is Nonribisomal peptide synthetase malG (Malbranchea aurantiaca).